Consider the following 68-residue polypeptide: Metallothionein (68 aa).

The a divalent metal cation site is built by Cys-7, Cys-9, Cys-14, Cys-16, Cys-20, Cys-22, Cys-25, Cys-27, Cys-35, Cys-39, Cys-40, Cys-42, Cys-43, Cys-47, Cys-50, Cys-54, Cys-56, Cys-64, Cys-66, and Cys-67.

It belongs to the metallothionein superfamily. Type 1 family.

Metallothioneins have a high content of cysteine residues that bind various heavy metals. The polypeptide is Metallothionein (mt) (Scyliorhinus torazame (Cloudy catshark)).